Here is a 761-residue protein sequence, read N- to C-terminus: Elongation factor G, mitochondrial (761 aa).

The transit peptide at 1-42 (MSVQKMMWVPRKMVGGRIPFFTCSKVFSGFSRRSFHESPLAR) directs the protein to the mitochondrion. A tr-type G domain is found at 68-349 (NKLRNIGISA…AIVDYLPNPS (282 aa)). GTP contacts are provided by residues 77–84 (AHIDSGKT), 148–152 (DTPGH), and 202–205 (NKMD).

Belongs to the TRAFAC class translation factor GTPase superfamily. Classic translation factor GTPase family. EF-G/EF-2 subfamily. The precursor is processed in two steps involving mitochondrial intermediate peptidase (MIP) and mitochondrial processing peptidase (MPP).

It is found in the mitochondrion. It participates in protein biosynthesis; polypeptide chain elongation. In terms of biological role, mitochondrial GTPase that catalyzes the GTP-dependent ribosomal translocation step during translation elongation. During this step, the ribosome changes from the pre-translocational (PRE) to the post-translocational (POST) state as the newly formed A-site-bound peptidyl-tRNA and P-site-bound deacylated tRNA move to the P and E sites, respectively. Catalyzes the coordinated movement of the two tRNA molecules, the mRNA and conformational changes in the ribosome. This chain is Elongation factor G, mitochondrial, found in Saccharomyces cerevisiae (strain ATCC 204508 / S288c) (Baker's yeast).